The following is a 156-amino-acid chain: V-type proton ATPase 16 kDa proteolipid subunit c (156 aa).

The Lumenal segment spans residues 1 to 7; that stretch reads MAENPIY. The helical transmembrane segment at 8 to 30 threads the bilayer; that stretch reads GPFFGVMGAASAIIFSALGAAYG. At 31–52 the chain is on the cytoplasmic side; that stretch reads TAKSGTGIAAMSVMRPELIMKS. A helical membrane pass occupies residues 53–73; that stretch reads IIPVVMAGIIAIYGLVVAVLI. Topologically, residues 74-92 are lumenal; that stretch reads AGSLDAPSNNYTLYKGFIH. Residues 93–114 traverse the membrane as a helical segment; the sequence is LGAGLAVGFSGLAAGFAIGIVG. Topologically, residues 115–126 are cytoplasmic; it reads DAGVRGTAQQPR. A helical transmembrane segment spans residues 127 to 152; that stretch reads LFVGMILILIFAEVLGLYGLIVAIYL. The Lumenal segment spans residues 153–156; that stretch reads YTKQ.

The protein belongs to the V-ATPase proteolipid subunit family. V-ATPase is a heteromultimeric enzyme made up of two complexes: the ATP-hydrolytic V1 complex and the proton translocation V0 complex. The V1 complex consists of three catalytic AB heterodimers that form a heterohexamer, three peripheral stalks each consisting of EG heterodimers, one central rotor including subunits D and F, and the regulatory subunits C and H. The proton translocation complex V0 consists of the proton transport subunit a, a ring of proteolipid subunits c9c'', rotary subunit d, subunits e and f, and the accessory subunits VhaAC45 and ATP6AP2.

The protein resides in the membrane. Its function is as follows. Proton-conducting pore forming subunit of the V0 complex of vacuolar(H+)-ATPase (V-ATPase), a multisubunit enzyme composed of a peripheral complex (V1) that hydrolyzes ATP and a membrane integral complex (V0) that translocates protons. V-ATPase is responsible for acidifying and maintaining the pH of intracellular compartments and in some cell types, is targeted to the plasma membrane, where it is responsible for acidifying the extracellular environment. In Heliothis virescens (Tobacco budworm moth), this protein is V-type proton ATPase 16 kDa proteolipid subunit c (VHA16).